A 348-amino-acid polypeptide reads, in one-letter code: RNA 3'-terminal phosphate cyclase (348 aa).

Residues Gln-107 and 290–294 each bind ATP; that span reads HLADQ. His-316 (tele-AMP-histidine intermediate) is an active-site residue.

This sequence belongs to the RNA 3'-terminal cyclase family. Type 1 subfamily.

Its subcellular location is the cytoplasm. It catalyses the reaction a 3'-end 3'-phospho-ribonucleotide-RNA + ATP = a 3'-end 2',3'-cyclophospho-ribonucleotide-RNA + AMP + diphosphate. Functionally, catalyzes the conversion of 3'-phosphate to a 2',3'-cyclic phosphodiester at the end of RNA. The mechanism of action of the enzyme occurs in 3 steps: (A) adenylation of the enzyme by ATP; (B) transfer of adenylate to an RNA-N3'P to produce RNA-N3'PP5'A; (C) and attack of the adjacent 2'-hydroxyl on the 3'-phosphorus in the diester linkage to produce the cyclic end product. The biological role of this enzyme is unknown but it is likely to function in some aspects of cellular RNA processing. The polypeptide is RNA 3'-terminal phosphate cyclase (Trichormus variabilis (strain ATCC 29413 / PCC 7937) (Anabaena variabilis)).